Here is a 107-residue protein sequence, read N- to C-terminus: Transmembrane protein 213 (107 aa).

Residues 1 to 27 (MQRLPAATRATLILSLAFASLHSACSA) form the signal peptide. The Extracellular segment spans residues 28 to 70 (EASSSNSSSLTAHHPDPGTLEQCLNVDFCPQAARCCRTGVDEY). The chain crosses the membrane as a helical span at residues 71–91 (GWIAAAVGWSLWFLTLILLCV). Topologically, residues 92-107 (DKLMKLTPDEPKDLQA) are cytoplasmic.

It is found in the membrane. In Homo sapiens (Human), this protein is Transmembrane protein 213 (TMEM213).